A 340-amino-acid polypeptide reads, in one-letter code: MDGPQPPALWGSLENRVSELSQKLQGEYFRYKGIPFPVGMYTPESLSLAENTSNVRDDDIFIVTYPKSGTNWMIEIICLILKDGDPSWIRSEPIWQRAPWCETTISAFSLPERPSPRLMCSHLPIELFTKAAFSSKAKVIYLGRNPRDVVVSLYYYSKIAVQLKDPGTPEQFLQNFLKGEVQFGSWFDHIKGWIRMRGRENFLFITYEELQQDLRGSVQLICEFLGRPLGEEALSSVVAHSAFAAMKANNMSNYTLLPASLLDHRQGAFLRKGISGDWKNHFTVAQSETFDQVYREQMHGLPSFPWDRSAEDGSPDGETEPSPSPSPGLASDDPNPGSSQ.

A 3'-phosphoadenylyl sulfate-binding site is contributed by 67 to 72 (KSGTNW). Trp-95 and Trp-100 together coordinate substrate. Catalysis depends on His-122, which acts as the Proton acceptor. Residues Arg-144, Ser-152, Tyr-207, 241 to 246 (SAFAAM), and 271 to 273 (RKG) each bind 3'-phosphoadenylyl sulfate. Residues 301-340 (LPSFPWDRSAEDGSPDGETEPSPSPSPGLASDDPNPGSSQ) are disordered.

Belongs to the sulfotransferase 1 family. In terms of tissue distribution, isoform 1 is expressed in skin and testis. Higher level of isoform 2 expressed in skin and intestine, moderate level in the kidney, low level in liver, stomach and placenta.

The protein resides in the cytoplasm. It is found in the cytosol. It localises to the microsome. Its subcellular location is the nucleus. The catalysed reaction is an alcohol + 3'-phosphoadenylyl sulfate = an alkyl sulfate + adenosine 3',5'-bisphosphate + H(+). It carries out the reaction pregnenolone + 3'-phosphoadenylyl sulfate = pregnenolone sulfate + adenosine 3',5'-bisphosphate + H(+). It catalyses the reaction 3beta-hydroxyandrost-5-en-17-one + 3'-phosphoadenylyl sulfate = dehydroepiandrosterone 3-sulfate + adenosine 3',5'-bisphosphate + H(+). The enzyme catalyses cholesterol + 3'-phosphoadenylyl sulfate = cholesterol sulfate + adenosine 3',5'-bisphosphate + H(+). Sulfotransferase that utilizes 3'-phospho-5'-adenylyl sulfate (PAPS) as sulfonate donor to catalyze the sulfate conjugation. Sulfonation increases the water solubility of most compounds, and therefore their renal excretion, but it can also result in bioactivation to form active metabolites. Sulfonates cholesterol. Catalyzes sulfation of the 3beta-hydroxyl groups of steroids, such as, pregnenolone and dehydroepiandrosterone (DHEA). Conjugates efficiently cholesterol but has a greater affinity for pregnenolone sulfation. Does not show high activity with DHEA. Plays a role in epidermal cholesterol metabolism and in the regulation of epidermal proliferation and differentiation. In terms of biological role, prefers pregnenolone over DHEA as a substrate and does not sulfate cholesterol. This Rattus norvegicus (Rat) protein is Sulfotransferase 2B1.